The sequence spans 703 residues: DnaJ homolog subfamily C member 14 (703 aa).

Disordered regions lie at residues 1 to 150 and 164 to 229; these read MAQK…DGSS and EDEE…RKRS. Over residues 17-28 the composition is skewed to low complexity; that stretch reads SGGSSLITSGSS. Residues 75–84 show a composition bias toward pro residues; it reads HGPPRGPGPP. 2 stretches are compositionally biased toward acidic residues: residues 89-102 and 164-176; these read YPDE…ESGV and EDEE…DDEE. The span at 193-202 shows a compositional bias: basic residues; that stretch reads PPSRRQRHRF. Residues 203–218 show a composition bias toward basic and acidic residues; the sequence is LTKEDVRDSGRRDPKA. Residues 219 to 228 show a composition bias toward basic residues; sequence PGRHRLARKR. 3 helical membrane-spanning segments follow: residues 254 to 274, 305 to 325, and 327 to 347; these read WWLI…GYLI, VMFQ…IRLL, and VVGA…QLGW. One can recognise a J domain in the interval 444 to 508; the sequence is NPFHVLGVEA…ERRKEYEMKR (65 aa). 2 disordered regions span residues 622–643 and 659–703; these read FGSR…PPAD and MSNG…PFQR. Residues 673–684 are compositionally biased toward polar residues; that stretch reads GTTSTSRPNSSV. Over residues 691–703 the composition is skewed to basic residues; the sequence is PKRRKKVRRPFQR.

In terms of assembly, interacts with the FxxxFxxxF motif of DRD1 via its C-terminal domain. As to expression, detected in heart, brain, lung, liver, skeletal muscle, kidney and testis.

Its subcellular location is the endoplasmic reticulum membrane. Regulates the export of target proteins, such as DRD1, from the endoplasmic reticulum to the cell surface. This Rattus norvegicus (Rat) protein is DnaJ homolog subfamily C member 14 (Dnajc14).